Consider the following 57-residue polypeptide: MKYFVVLVVLALILAISVGPSDAVFIDILDKVENAIHNAAQVGIGFAKPFEKLINPK.

The signal sequence occupies residues 1–23 (MKYFVVLVVLALILAISVGPSDA).

This sequence belongs to the andropin family. In terms of tissue distribution, ejaculatory duct of adult males.

It localises to the secreted. In terms of biological role, male-specific peptide with moderate activity against Gram-positive bacteria. The polypeptide is Andropin (Anp) (Drosophila melanogaster (Fruit fly)).